A 144-amino-acid chain; its full sequence is D-aminoacyl-tRNA deacylase (144 aa).

The short motif at 136 to 137 (GP) is the Gly-cisPro motif, important for rejection of L-amino acids element.

It belongs to the DTD family. In terms of assembly, homodimer.

The protein resides in the cytoplasm. The catalysed reaction is glycyl-tRNA(Ala) + H2O = tRNA(Ala) + glycine + H(+). The enzyme catalyses a D-aminoacyl-tRNA + H2O = a tRNA + a D-alpha-amino acid + H(+). An aminoacyl-tRNA editing enzyme that deacylates mischarged D-aminoacyl-tRNAs. Also deacylates mischarged glycyl-tRNA(Ala), protecting cells against glycine mischarging by AlaRS. Acts via tRNA-based rather than protein-based catalysis; rejects L-amino acids rather than detecting D-amino acids in the active site. By recycling D-aminoacyl-tRNA to D-amino acids and free tRNA molecules, this enzyme counteracts the toxicity associated with the formation of D-aminoacyl-tRNA entities in vivo and helps enforce protein L-homochirality. The sequence is that of D-aminoacyl-tRNA deacylase from Haemophilus influenzae (strain PittGG).